Here is an 85-residue protein sequence, read N- to C-terminus: Toxin BmKAEP (85 aa).

The signal sequence occupies residues 1-21 (MKLFLLLVISASMLIDGLVNA). The region spanning 22 to 82 (DGYIRGSNGC…TWKSESNTCG (61 aa)) is the LCN-type CS-alpha/beta domain. Disulfide bonds link Cys-31/Cys-81, Cys-35/Cys-56, Cys-42/Cys-63, and Cys-46/Cys-65. Residue Gly-82 is modified to Glycine amide.

In terms of tissue distribution, expressed by the venom gland.

The protein localises to the secreted. In terms of biological role, shows anti-epileptic activity. Shares high homology with depressant insect toxins, but shows very weak toxicity against mammals and insects and no obvious symptoms on insect larvae. May target voltage-gated sodium channel (Nav). This chain is Toxin BmKAEP, found in Olivierus martensii (Manchurian scorpion).